The chain runs to 1306 residues: Angiotensin-converting enzyme (1306 aa).

Positions 1–28 (MGAASGRRSPPLLLPLLLLLLPPPPVIL) are cleaved as a signal peptide. At 29 to 1256 (ELDPALQPGN…GLNLEEQQAR (1228 aa)) the chain is on the extracellular side. Peptidase M2 domains follow at residues 40–624 (PADE…LGWP) and 643–1222 (VSDE…LGWP). Residues Asn-54, Asn-74, Asn-111, Asn-146, and Asn-160 are each glycosylated (N-linked (GlcNAc...) asparagine). Cys-157 and Cys-165 are joined by a disulfide. Residue Tyr-231 coordinates chloride. Asn-318 is a glycosylation site (N-linked (GlcNAc...) asparagine). Cysteines 359 and 377 form a disulfide. Residue His-390 participates in Zn(2+) binding. Residue Glu-391 is the Proton acceptor 1 of the active site. Zn(2+) contacts are provided by His-394 and Glu-418. 2 N-linked (GlcNAc...) asparagine glycosylation sites follow: Asn-445 and Asn-509. His-520 (proton donor 1) is an active-site residue. Asn-523 carries N-linked (GlcNAc...) asparagine glycosylation. A chloride-binding site is contributed by Arg-529. A disulfide bridge links Cys-545 with Cys-557. N-linked (GlcNAc...) asparagine glycosylation is found at Asn-673, Asn-695, Asn-714, and Asn-760. Cys-757 and Cys-763 are joined by a disulfide. The chloride site is built by Arg-791 and Tyr-829. Asn-942 carries N-linked (GlcNAc...) asparagine glycosylation. A disulfide bridge connects residues Cys-957 and Cys-975. Residue His-988 participates in Zn(2+) binding. Catalysis depends on Glu-989, which acts as the Proton acceptor 2. The Zn(2+) site is built by His-992 and Glu-1016. 2 residues coordinate chloride: Trp-1090 and Arg-1094. His-1118 (proton donor 2) is an active-site residue. Arg-1127 is a binding site for chloride. Cys-1143 and Cys-1155 are disulfide-bonded. 2 N-linked (GlcNAc...) asparagine glycosylation sites follow: Asn-1191 and Asn-1225. Residues 1215-1256 (HGEKLGWPQYNWTPNSARLEGPFVGSGRVNFLGLNLEEQQAR) form a juxtamembrane stalk region. The helical transmembrane segment at 1257–1277 (VGQWVLLFLGVALLVATLGLT) threads the bilayer. Residues 1278–1306 (QRLFSIRHHSLRRPHRGPQFGSEVELRHS) are Cytoplasmic-facing. Ser-1299 carries the post-translational modification Phosphoserine.

This sequence belongs to the peptidase M2 family. In terms of assembly, monomer and homodimer; homodimerizes following binding to an inhibitor. Interacts with calmodulin (CALM1, CALM2 or CALM3); interaction takes place in the cytoplasmic region and regulates phosphorylation and proteolytic cleavage. The cofactor is Zn(2+). It depends on chloride as a cofactor. Post-translationally, produced following proteolytic cleavage by secretase enzymes that cleave the transmembrane form in the juxtamembrane stalk region upstream of the transmembrane region. Cleavage can take place at different sites of the juxtamembrane stalk region. Phosphorylated by CK2 on Ser-1299; which allows membrane retention. Phosphorylated on tyrosine residues on its extracellular part, promoting cleavage by secretase enzymes and formation of the soluble form (Angiotensin-converting enzyme, soluble form).

It localises to the cell membrane. It is found in the cytoplasm. Its subcellular location is the secreted. It carries out the reaction Release of a C-terminal dipeptide, oligopeptide-|-Xaa-Yaa, when Xaa is not Pro, and Yaa is neither Asp nor Glu. Thus, conversion of angiotensin I to angiotensin II, with increase in vasoconstrictor activity, but no action on angiotensin II.. The enzyme catalyses angiotensin I + H2O = L-histidyl-L-leucine + angiotensin II. It catalyses the reaction bradykinin + H2O = L-Phe-L-Arg + bradykinin(1-7). The catalysed reaction is substance P + H2O = substance P(1-9) + L-Leu-L-Met-NH2. It carries out the reaction substance P + H2O = substance P(1-8) + Gly-L-Leu-L-Met-NH2. The enzyme catalyses substance P + H2O = L-Phe-L-Phe-Gly-L-Leu-L-Met-NH2 + substance P(1-6). It catalyses the reaction neurotensin + H2O = neurotensin(1-11) + L-isoleucyl-L-leucine. The catalysed reaction is goralatide + H2O = N-acetyl-L-seryl-L-aspartate + L-lysyl-L-proline. It carries out the reaction Met-enkephalin + H2O = L-phenylalanyl-L-methionine + L-tyrosylglycylglycine. The enzyme catalyses Leu-enkephalin + H2O = L-tyrosylglycylglycine + L-phenylalanyl-L-leucine. It catalyses the reaction Met-enkephalin-Arg-Phe + H2O = L-arginyl-L-phenylalanine + Met-enkephalin. Its activity is regulated as follows. The dipeptidyl carboxypeptidase activity is strongly activated by chloride. The dipeptidyl carboxypeptidase activity is specifically inhibited by lisinopril, captopril and enalaprilat. Its function is as follows. Dipeptidyl carboxypeptidase that removes dipeptides from the C-terminus of a variety of circulating hormones, such as angiotensin I, bradykinin or enkephalins, thereby playing a key role in the regulation of blood pressure, electrolyte homeostasis or synaptic plasticity. Composed of two similar catalytic domains, each possessing a functional active site, with different selectivity for substrates. Plays a major role in the angiotensin-renin system that regulates blood pressure and sodium retention by the kidney by converting angiotensin I to angiotensin II, resulting in an increase of the vasoconstrictor activity of angiotensin. Also able to inactivate bradykinin, a potent vasodilator, and therefore enhance the blood pressure response. Acts as a regulator of synaptic transmission by mediating cleavage of neuropeptide hormones, such as substance P, neurotensin or enkephalins. Catalyzes degradation of different enkephalin neuropeptides (Met-enkephalin, Leu-enkephalin, Met-enkephalin-Arg-Phe and possibly Met-enkephalin-Arg-Gly-Leu). Acts as a regulator of synaptic plasticity in the nucleus accumbens of the brain by mediating cleavage of Met-enkephalin-Arg-Phe, a strong ligand of Mu-type opioid receptor OPRM1, into Met-enkephalin. Met-enkephalin-Arg-Phe cleavage by ACE decreases activation of OPRM1, leading to long-term synaptic potentiation of glutamate release. Also acts as a regulator of hematopoietic stem cell differentiation by mediating degradation of hemoregulatory peptide N-acetyl-SDKP (AcSDKP). Acts as a regulator of cannabinoid signaling pathway by mediating degradation of hemopressin, an antagonist peptide of the cannabinoid receptor CNR1. Involved in amyloid-beta metabolism by catalyzing degradation of Amyloid-beta protein 40 and Amyloid-beta protein 42 peptides, thereby preventing plaque formation. Catalyzes cleavage of cholecystokinin (maturation of Cholecystokinin-8 and Cholecystokinin-5) and Gonadoliberin-1 (both maturation and degradation) hormones. Degradation of hemoregulatory peptide N-acetyl-SDKP (AcSDKP) and amyloid-beta proteins is mediated by the N-terminal catalytic domain, while angiotensin I and cholecystokinin cleavage is mediated by the C-terminal catalytic region. Soluble form that is released in blood plasma and other body fluids following proteolytic cleavage in the juxtamembrane stalk region. The protein is Angiotensin-converting enzyme of Bos taurus (Bovine).